Here is a 1421-residue protein sequence, read N- to C-terminus: ALK tyrosine kinase receptor homolog scd-2 (1421 aa).

The N-terminal stretch at 1-20 (MRKRRLWWFVVLFRVTLVGA) is a signal peptide. Residues 21–903 (ILPNETFDVR…DTCEEIQIWT (883 aa)) are Extracellular-facing. Asn-24, Asn-44, Asn-70, Asn-83, Asn-119, and Asn-201 each carry an N-linked (GlcNAc...) asparagine glycan. The LDL-receptor class A domain occupies 300 to 338 (QCSRGDQFLCSISANTRCLQNAQCDSRIDCDDESDEMDC). 3 cysteine pairs are disulfide-bonded: Cys-301-Cys-317, Cys-309-Cys-329, and Cys-323-Cys-338. One can recognise an MAM domain in the interval 339–542 (GNINGTMCDF…NLSFSPTCFE (204 aa)). 11 N-linked (GlcNAc...) asparagine glycosylation sites follow: Asn-342, Asn-362, Asn-495, Asn-533, Asn-546, Asn-633, Asn-726, Asn-793, Asn-849, Asn-873, and Asn-893. Residues 904-924 (LYNITFLIFAALTIIGALFVV) form a helical membrane-spanning segment. Residues 925–1421 (YHYRNREKQM…SVPLLECQTR (497 aa)) lie on the Cytoplasmic side of the membrane. The Protein kinase domain maps to 976–1261 (IERGRVLGRG…GMPFPIHPAV (286 aa)). Residues 982 to 990 (LGRGNFGEV) and Lys-1003 each bind ATP. Residue Asp-1106 is the Proton acceptor of the active site.

The protein belongs to the protein kinase superfamily. Tyr protein kinase family. Insulin receptor subfamily. Interacts (via cytoplasmic domain) with fsn-1 (via SPRY domain). Expressed in AIA sensory neurons.

Its subcellular location is the cell membrane. The enzyme catalyses L-tyrosyl-[protein] + ATP = O-phospho-L-tyrosyl-[protein] + ADP + H(+). Its function is as follows. Probable tyrosine-protein kinase receptor which regulates the dauer/non-dauer developmental decision probably by controlling daf-3 transcriptional activity in parallel or together with the TGF-beta pathway. Regulates integration of conflicting sensory cues in AIA interneurons. May act as a receptor for hen-1. In AWA neurons, together with hen-1, plays a role in regulating olfactory adaptation by controlling the forgetting sensory responses to odorants such as diacetyl. This Caenorhabditis elegans protein is ALK tyrosine kinase receptor homolog scd-2.